Reading from the N-terminus, the 191-residue chain is Thymidylate kinase (191 aa).

7–14 serves as a coordination point for ATP; it reads GVDGAGKS.

It belongs to the thymidylate kinase family.

It carries out the reaction dTMP + ATP = dTDP + ADP. Phosphorylation of dTMP to form dTDP in both de novo and salvage pathways of dTTP synthesis. The sequence is that of Thymidylate kinase from Helicobacter pylori (strain Shi470).